The following is a 418-amino-acid chain: Glutamyl-tRNA reductase (418 aa).

Residues 49–52, Ser-109, 114–116, and Gln-120 each bind substrate; these read TCNR and EPQ. The active-site Nucleophile is the Cys-50. Residue 189 to 194 participates in NADP(+) binding; the sequence is GAGETI.

This sequence belongs to the glutamyl-tRNA reductase family. Homodimer.

The enzyme catalyses (S)-4-amino-5-oxopentanoate + tRNA(Glu) + NADP(+) = L-glutamyl-tRNA(Glu) + NADPH + H(+). Its pathway is porphyrin-containing compound metabolism; protoporphyrin-IX biosynthesis; 5-aminolevulinate from L-glutamyl-tRNA(Glu): step 1/2. Functionally, catalyzes the NADPH-dependent reduction of glutamyl-tRNA(Glu) to glutamate 1-semialdehyde (GSA). This is Glutamyl-tRNA reductase from Salmonella choleraesuis (strain SC-B67).